A 1776-amino-acid chain; its full sequence is 6-methylsalicylic acid synthase (1776 aa).

Residues 1 to 18 are compositionally biased toward low complexity; sequence MHSVSPSTYPSGGTSPAP. The tract at residues 1 to 26 is disordered; that stretch reads MHSVSPSTYPSGGTSPAPADTPGTEY. The region spanning 32–457 is the Ketosynthase family 3 (KS3) domain; sequence SNDVAVVGMA…GTVSHAVIEE (426 aa). Residues C204, H339, and H379 each act as for beta-ketoacyl synthase activity in the active site. Positions 567–880 are malonyl-CoA:ACP transacylase (MAT) domain; that stretch reads VWVFSGHGAQ…IAQLHCRGAE (314 aa). The tract at residues 925–1044 is N-terminal hotdog fold; it reads HTLLGQRIPV…AYWDRKVLGS (120 aa). Residues 925–1196 form a dehydratase (DH) domain region; that stretch reads HTLLGQRIPV…FTAMRFSEIE (272 aa). Positions 925–1201 constitute a PKS/mFAS DH domain; sequence HTLLGQRIPV…FSEIEGTPGV (277 aa). Residue H957 is the Proton acceptor; for dehydratase activity of the active site. Residues 1058-1201 form a C-terminal hotdog fold region; it reads TTKLADNFSI…FSEIEGTPGV (144 aa). The Proton donor; for dehydratase activity role is filled by D1113. The interval 1205-1657 is product template (PT) domain; that stretch reads MESLVHQIAW…LRSLAIDDGE (453 aa). The region spanning 1700–1774 is the Carrier domain; the sequence is AYLDEKIRGC…HLVVWFAEKI (75 aa). S1734 carries the post-translational modification O-(pantetheine 4'-phosphoryl)serine.

The protein localises to the cytoplasm. It localises to the cytosol. It catalyses the reaction 3 malonyl-CoA + acetyl-CoA + NADPH + 3 H(+) = 6-methylsalicylate + 3 CO2 + NADP(+) + 4 CoA + H2O. It functions in the pathway mycotoxin biosynthesis; patulin biosynthesis. Its function is as follows. 6-methylsalicylic acid synthase; part of the gene cluster that mediates the biosynthesis of patulin, an acetate-derived tetraketide mycotoxin produced by several fungal species that shows antimicrobial properties against several bacteria. PatK catalyzes the first step of the pathway which is the synthesis of 6-methylsalicylic acid via condensation of 1 acetate and 3 malonate units. The pathway begins with the synthesis of 6-methylsalicylic acid by the polyketide synthase (PKS) patK via condensation of acetate and malonate units. The 6-methylsalicylic acid decarboxylase patG then catalyzes the decarboxylation of 6-methylsalicylic acid to yield m-cresol (also known as 3-methylphenol). These first reactions occur in the cytosol. The intermediate m-cresol is then transported into the endoplasmic reticulum where the cytochrome P450 monooxygenase patH converts it to m-hydroxybenzyl alcohol, which is further converted to gentisyl alcohol by the cytochrome P450 monooxygenase patI. The oxidoreductases patJ and patO further convert gentisyl alcohol to isoepoxydon in the vacuole. PatN catalyzes then the transformation of isoepoxydon into phyllostine. The cluster protein patF is responsible for the conversion from phyllostine to neopatulin whereas the alcohol dehydrogenase patD converts neopatulin to E-ascladiol. The steps between isoepoxydon and E-ascladiol occur in the cytosol, and E-ascladiol is probably secreted to the extracellular space by one of the cluster-specific transporters patC or patM. Finally, the secreted patulin synthase patE catalyzes the conversion of E-ascladiol to patulin. This chain is 6-methylsalicylic acid synthase, found in Penicillium expansum (Blue mold rot fungus).